The following is a 502-amino-acid chain: MSIRAEEISALLKARIAQYGSTMEVNETGTVIQIGDGIARAHGLDNVMSGELVEFANGTMGLAQNLEEGNVGIIILGDYLEIKEGDSVRRTGRIMEVPTGDALLGRVVNPLGMPIDGLGPIETEHYNPIERKASGVMARKSVHEPLQTGIKAIDALVPIGRGQRELIIGDRQTGKTSIAIDTIINQKEENMICIYVAIGQKESTVRGVVETLRKNGALDYTIVVSAAASQPAPLLYLAPFAGVAMGEHFMDLGKHVLVIYDDLSKQAAAYRELSLLLKRPPGREAYPGDVFYLHSRLLERAAKLNDGLGAGSLTALPFIETQASDISAYIPTNVISITDGQIFLQSDLFFSGVRPAINPGLSVSRVGGSAQVKAMKKVAGTLRLDLASYRELEAFSQFGSDLDKATQSKLNRGERTVEVLKQDLNQPLTVDKQVIIIYALTRGHLDDVAVSDIRRFEKELNLWLDQNRKQLCDEIRKTGNLPADEEIVTAISEFKKTFQPTV.

Residue 169-176 (GDRQTGKT) participates in ATP binding.

The protein belongs to the ATPase alpha/beta chains family. As to quaternary structure, F-type ATPases have 2 components, CF(1) - the catalytic core - and CF(0) - the membrane proton channel. CF(1) has five subunits: alpha(3), beta(3), gamma(1), delta(1), epsilon(1). CF(0) has three main subunits: a(1), b(2) and c(9-12). The alpha and beta chains form an alternating ring which encloses part of the gamma chain. CF(1) is attached to CF(0) by a central stalk formed by the gamma and epsilon chains, while a peripheral stalk is formed by the delta and b chains.

It is found in the cell membrane. It carries out the reaction ATP + H2O + 4 H(+)(in) = ADP + phosphate + 5 H(+)(out). In terms of biological role, produces ATP from ADP in the presence of a proton gradient across the membrane. The alpha chain is a regulatory subunit. The sequence is that of ATP synthase subunit alpha from Exiguobacterium sibiricum (strain DSM 17290 / CCUG 55495 / CIP 109462 / JCM 13490 / 255-15).